Reading from the N-terminus, the 396-residue chain is Elongation factor Tu 1 (396 aa).

The tr-type G domain maps to 10 to 206 (KPHVNVGTIG…QIDSYIPEPE (197 aa)). The tract at residues 19 to 26 (GHIDHGKT) is G1. 19 to 26 (GHIDHGKT) serves as a coordination point for GTP. T26 contacts Mg(2+). The segment at 60 to 64 (GITIA) is G2. Positions 81-84 (DCPG) are G3. Residues 81–85 (DCPGH) and 136–139 (NKCD) each bind GTP. Residues 136–139 (NKCD) are G4. The interval 174-176 (SAL) is G5.

The protein belongs to the TRAFAC class translation factor GTPase superfamily. Classic translation factor GTPase family. EF-Tu/EF-1A subfamily. Monomer.

It localises to the cytoplasm. The enzyme catalyses GTP + H2O = GDP + phosphate + H(+). In terms of biological role, GTP hydrolase that promotes the GTP-dependent binding of aminoacyl-tRNA to the A-site of ribosomes during protein biosynthesis. In Desulfotalea psychrophila (strain LSv54 / DSM 12343), this protein is Elongation factor Tu 1.